We begin with the raw amino-acid sequence, 928 residues long: Protein Niban 1 (928 aa).

Residue Gly-2 is the site of N-myristoyl glycine attachment. Phosphoserine is present on residues Ser-579, Ser-582, Ser-596, Ser-602, and Ser-646. A compositionally biased stretch (polar residues) spans 580–596; it reads VSSLTDLKPPTGSNQAS. A disordered region spans residues 580–600; it reads VSSLTDLKPPTGSNQASPARR. Disordered regions lie at residues 618–654 and 669–707; these read VFQE…GTEQ and ATED…TASG. Over residues 690–701 the composition is skewed to acidic residues; sequence LEDEEPAQEEPE. Residue Ser-708 is modified to Phosphoserine. Disordered stretches follow at residues 723–877 and 899–928; these read PVDS…ATAS and PNPD…PSEE. Residues 801–818 show a composition bias toward low complexity; that stretch reads GGLTEEPLGPMEGELPGE. The segment covering 825–834 has biased composition (basic and acidic residues); sequence HEGRGGKCTE. Residues 865 to 877 show a composition bias toward low complexity; the sequence is MGGQSSAAQATAS. A compositionally biased stretch (basic and acidic residues) spans 905–915; sequence LSHKDDVKEGE. Position 926 is a phosphoserine (Ser-926).

Belongs to the Niban family. In terms of tissue distribution, expressed in various types of thyroid tumor such as papillary thyroid carcinomas and oxyphilic thyroid tumors but not in normal thyroid tissue (at protein level). Strongly expressed in heart, skeletal muscle, pancreas, white blood cells and prostate with moderate expression in colon and spleen. Expressed in renal carcinoma cells but not in normal kidney.

Its subcellular location is the cytoplasm. It localises to the membrane. Functionally, regulates phosphorylation of a number of proteins involved in translation regulation including EIF2A, EIF4EBP1 and RPS6KB1. May be involved in the endoplasmic reticulum stress response. This chain is Protein Niban 1, found in Homo sapiens (Human).